Here is a 952-residue protein sequence, read N- to C-terminus: Glutamate receptor 2.7 (952 aa).

A signal peptide spans 1-32; that stretch reads MKVMNPRKTNNTFMYYFVLFVCGFVLMEGCLG. The Extracellular segment spans residues 33 to 582; that stretch reads QNQTTEIKVG…NTWVFLRPWS (550 aa). N-linked (GlcNAc...) asparagine glycans are attached at residues Asn34, Asn60, Asn355, Asn428, and Asn546. The helical transmembrane segment at 583-603 threads the bilayer; it reads LDLWVTTACFFVFIGFIVWIL. The Cytoplasmic segment spans residues 604-612; it reads EHRVNTDFR. The helical transmembrane segment at 613–633 threads the bilayer; the sequence is GPPHHQIGTSFWFAFSTMNFA. Topologically, residues 634 to 637 are cytoplasmic; that stretch reads HREK. A helical membrane pass occupies residues 638-658; sequence VVSNLARFVVLVWCFVVLVLI. Over 659–821 the chain is Extracellular; the sequence is QSYTANLTSF…LSSNHLSLSS (163 aa). N-linked (GlcNAc...) asparagine glycans are attached at residues Asn664, Asn728, Asn748, Asn784, and Asn809. The chain crosses the membrane as a helical span at residues 822-842; that stretch reads FWGLFLIAGIASFLALLIFVA. The Cytoplasmic portion of the chain corresponds to 843–952; sequence NFLYEHKHTL…ESAIIQCEGE (110 aa). The segment covering 889–908 has biased composition (polar residues); the sequence is VSSPITQGSSSPLTDQSTPL. Disordered regions lie at residues 889–914 and 932–952; these read VSSPITQGSSSPLTDQSTPLPRSPEQ and FTTQSEQVEDEESAIIQCEGE.

This sequence belongs to the glutamate-gated ion channel (TC 1.A.10.1) family. In terms of assembly, may form heteromers. In terms of tissue distribution, expressed predominantly in leaves.

It is found in the membrane. Its function is as follows. Glutamate-gated receptor that probably acts as a non-selective cation channel. May be involved in light-signal transduction and calcium homeostasis via the regulation of calcium influx into cells. The polypeptide is Glutamate receptor 2.7 (GLR2.7) (Arabidopsis thaliana (Mouse-ear cress)).